Here is a 487-residue protein sequence, read N- to C-terminus: F-box/LRR-repeat protein At1g48400 (487 aa).

An F-box domain is found at 9-57 (RDSISNLPDEILGKILSLLPTKVAASTSVLSKRWRNLLGLVDNLCFDES). 6 LRR repeats span residues 71 to 97 (SLRFCDFVDKTFALLSNSHIKKFSLSR), 125 to 153 (HLHATPMSFVAIETKLLTSNTLVKLTLSA), 174 to 199 (SILGDYTNYIRLIDGCPVLEELYMRD), 225 to 251 (THNPNEMIWHELIYFEAPSLVYLDYSS), 327 to 358 (TLHLSPDSLEVFHFCCKSMPVFNNLLNLSIES), and 359 to 384 (NKDKGWQVMPLLLKSCPNLHTLVIKG).

This chain is F-box/LRR-repeat protein At1g48400, found in Arabidopsis thaliana (Mouse-ear cress).